The primary structure comprises 952 residues: UPF0182 protein SRU_2225 (952 aa).

7 helical membrane-spanning segments follow: residues 12 to 32, 52 to 72, 109 to 129, 168 to 188, 207 to 227, 247 to 267, and 277 to 297; these read ILLGIIGVVFTVLLVTPGLVV, AQVLLFVLVFLVAGLYFGGNF, LGYVVAGVLSLLFAAGFSGRW, AVVGLAFLGLLALVTGYVIAG, LGANLIFLLLGWAWGFYLDLY, VVIPALYVMVAATLVLAGLVG, and LLGIGGAGYLVLLVGGLVLAP. Residues 917 to 952 are disordered; the sequence is VPLPDTTGTVPPPTSSDTTGTMTAPTGDVSEVTGGS. The span at 931-940 shows a compositional bias: polar residues; the sequence is SSDTTGTMTA.

It belongs to the UPF0182 family.

The protein localises to the cell membrane. The sequence is that of UPF0182 protein SRU_2225 from Salinibacter ruber (strain DSM 13855 / M31).